Reading from the N-terminus, the 351-residue chain is Dihydroorotate dehydrogenase (quinone) (351 aa).

FMN-binding positions include Ala61–Lys65 and Thr85. Residue Lys65 participates in substrate binding. Substrate is bound at residue Asn110 to Phe114. Positions 139 and 172 each coordinate FMN. Asn172 is a substrate binding site. Residue Ser175 is the Nucleophile of the active site. Asn177 contributes to the substrate binding site. FMN contacts are provided by Lys217 and Thr245. Asn246–Thr247 lines the substrate pocket. Residues Gly268, Gly297, and Tyr318 to Ser319 contribute to the FMN site.

This sequence belongs to the dihydroorotate dehydrogenase family. Type 2 subfamily. Monomer. Requires FMN as cofactor.

The protein localises to the cell membrane. It catalyses the reaction (S)-dihydroorotate + a quinone = orotate + a quinol. It functions in the pathway pyrimidine metabolism; UMP biosynthesis via de novo pathway; orotate from (S)-dihydroorotate (quinone route): step 1/1. In terms of biological role, catalyzes the conversion of dihydroorotate to orotate with quinone as electron acceptor. The sequence is that of Dihydroorotate dehydrogenase (quinone) from Xanthomonas axonopodis pv. citri (strain 306).